The sequence spans 126 residues: Aspartate 1-decarboxylase (126 aa).

Serine 25 (schiff-base intermediate with substrate; via pyruvic acid) is an active-site residue. Serine 25 is subject to Pyruvic acid (Ser). Threonine 57 serves as a coordination point for substrate. The Proton donor role is filled by tyrosine 58. 73–75 contributes to the substrate binding site; that stretch reads GGA.

Belongs to the PanD family. In terms of assembly, heterooctamer of four alpha and four beta subunits. It depends on pyruvate as a cofactor. Post-translationally, is synthesized initially as an inactive proenzyme, which is activated by self-cleavage at a specific serine bond to produce a beta-subunit with a hydroxyl group at its C-terminus and an alpha-subunit with a pyruvoyl group at its N-terminus.

The protein localises to the cytoplasm. The enzyme catalyses L-aspartate + H(+) = beta-alanine + CO2. The protein operates within cofactor biosynthesis; (R)-pantothenate biosynthesis; beta-alanine from L-aspartate: step 1/1. Catalyzes the pyruvoyl-dependent decarboxylation of aspartate to produce beta-alanine. The sequence is that of Aspartate 1-decarboxylase from Xylella fastidiosa (strain M12).